Consider the following 88-residue polypeptide: Small ribosomal subunit protein bS20 (88 aa).

Residues 1–36 (MANTSSAKKATRKIARRTAVNKSRRTQMRGSVRTVE) are disordered.

This sequence belongs to the bacterial ribosomal protein bS20 family.

Functionally, binds directly to 16S ribosomal RNA. The polypeptide is Small ribosomal subunit protein bS20 (Rhodopseudomonas palustris (strain HaA2)).